The following is a 466-amino-acid chain: ATP synthase subunit beta (466 aa).

155-162 (GGAGVGKT) contacts ATP.

This sequence belongs to the ATPase alpha/beta chains family. F-type ATPases have 2 components, CF(1) - the catalytic core - and CF(0) - the membrane proton channel. CF(1) has five subunits: alpha(3), beta(3), gamma(1), delta(1), epsilon(1). CF(0) has three main subunits: a(1), b(2) and c(9-12). The alpha and beta chains form an alternating ring which encloses part of the gamma chain. CF(1) is attached to CF(0) by a central stalk formed by the gamma and epsilon chains, while a peripheral stalk is formed by the delta and b chains.

It is found in the cell inner membrane. The catalysed reaction is ATP + H2O + 4 H(+)(in) = ADP + phosphate + 5 H(+)(out). In terms of biological role, produces ATP from ADP in the presence of a proton gradient across the membrane. The catalytic sites are hosted primarily by the beta subunits. The sequence is that of ATP synthase subunit beta from Bordetella petrii (strain ATCC BAA-461 / DSM 12804 / CCUG 43448).